Consider the following 481-residue polypeptide: Xylulose kinase (481 aa).

81 to 82 (QH) serves as a coordination point for substrate. Residue aspartate 239 is the Proton acceptor of the active site.

It belongs to the FGGY kinase family.

It carries out the reaction D-xylulose + ATP = D-xylulose 5-phosphate + ADP + H(+). In terms of biological role, catalyzes the phosphorylation of D-xylulose to D-xylulose 5-phosphate. This Streptomyces coelicolor (strain ATCC BAA-471 / A3(2) / M145) protein is Xylulose kinase.